The primary structure comprises 276 residues: Adenylate kinase (276 aa).

ATP is bound at residue 50-55; it reads GAGKGT. Positions 70 to 99 are NMP; that stretch reads ATGDMLRSQVAKKTPLGREAKKIMDQGGLV. AMP-binding positions include T71, R76, 97–99, 126–129, and Q133; these read GLV and GFPR. Positions 167–204 are LID; that stretch reads GRLVHPASGRSYHTTFNPPKKAMTDDVTGEPLIQRSDD. ATP contacts are provided by residues R168 and 177-178; that span reads SY. AMP-binding residues include R201 and R212. Q240 is a binding site for ATP.

This sequence belongs to the adenylate kinase family. AK2 subfamily. In terms of assembly, monomer.

The protein localises to the cytoplasm. It is found in the cytosol. Its subcellular location is the mitochondrion intermembrane space. The enzyme catalyses AMP + ATP = 2 ADP. Catalyzes the reversible transfer of the terminal phosphate group between ATP and AMP. Plays an important role in cellular energy homeostasis and in adenine nucleotide metabolism. Adenylate kinase activity is critical for regulation of the phosphate utilization and the AMP de novo biosynthesis pathways. This chain is Adenylate kinase, found in Pyricularia oryzae (strain 70-15 / ATCC MYA-4617 / FGSC 8958) (Rice blast fungus).